The primary structure comprises 454 residues: Divalent metal cation transporter MntH (454 aa).

Positions Met-1–Asp-21 are disordered. 11 helical membrane passes run Leu-45–Trp-65, Thr-78–Ala-98, Phe-122–Gly-142, Ile-153–Met-173, Ala-182–Ala-202, Ile-220–Pro-240, Ile-275–Phe-295, Leu-312–Ala-332, Gly-368–Gln-388, Leu-389–Val-409, and Gly-426–Leu-446.

This sequence belongs to the NRAMP family.

It localises to the cell inner membrane. Functionally, h(+)-stimulated, divalent metal cation uptake system. In Mesorhizobium japonicum (strain LMG 29417 / CECT 9101 / MAFF 303099) (Mesorhizobium loti (strain MAFF 303099)), this protein is Divalent metal cation transporter MntH.